Consider the following 329-residue polypeptide: Phosphoenolpyruvate transferase (329 aa).

A 7,8-didemethyl-8-hydroxy-5-deazariboflavin-binding site is contributed by Asp-61.

The protein belongs to the CofD family. As to quaternary structure, homodimer. Mg(2+) serves as cofactor.

It carries out the reaction enolpyruvoyl-2-diphospho-5'-guanosine + 7,8-didemethyl-8-hydroxy-5-deazariboflavin = dehydro coenzyme F420-0 + GMP + H(+). It functions in the pathway cofactor biosynthesis; coenzyme F420 biosynthesis. In terms of biological role, catalyzes the transfer of the phosphoenolpyruvate moiety from enoylpyruvoyl-2-diphospho-5'-guanosine (EPPG) to 7,8-didemethyl-8-hydroxy-5-deazariboflavin (FO) with the formation of dehydro coenzyme F420-0 and GMP. The protein is Phosphoenolpyruvate transferase of Mycobacterium marinum (strain ATCC BAA-535 / M).